Consider the following 326-residue polypeptide: F-box/LRR-repeat protein 12 (326 aa).

In terms of domain architecture, F-box spans 1–47 (MATFADLPDSVLLEIFSYLPVRDRIRISRVCHHWKKLVDDRWLWRHV). LRR repeat units follow at residues 51 to 78 (LYTM…RMGG), 86 to 111 (APQL…CLHV), 161 to 185 (VPAF…VLGG), 186 to 211 (TYRV…EVLG), 212 to 236 (CTLS…IRLT), 237 to 261 (VRGL…CLLG), and 266 to 291 (PEMP…ELQG).

Interacts with SKP1 and CUL1.

It functions in the pathway protein modification; protein ubiquitination. Its function is as follows. Substrate-recognition component of the SCF (SKP1-CUL1-F-box protein)-type E3 ubiquitin ligase complex. Mediates the polyubiquitination and proteasomal degradation of CAMK1 leading to disruption of cyclin D1/CDK4 complex assembly which results in G1 cell cycle arrest in lung epithelia. In Bos taurus (Bovine), this protein is F-box/LRR-repeat protein 12 (FBXL12).